Reading from the N-terminus, the 370-residue chain is Conserved virulence factor C (370 aa).

This sequence belongs to the CvfC family.

The chain is Conserved virulence factor C (cvfC) from Staphylococcus haemolyticus (strain JCSC1435).